We begin with the raw amino-acid sequence, 346 residues long: Aspartate-semialdehyde dehydrogenase (346 aa).

NADP(+)-binding positions include 13 to 16 (TGAV) and 41 to 42 (RS). Serine 98 is subject to Phosphoserine. Position 101 (arginine 101) interacts with phosphate. Cysteine 130 (acyl-thioester intermediate) is an active-site residue. At tyrosine 146 the chain carries Phosphotyrosine. Glutamine 157 is a substrate binding site. Position 160–161 (160–161 (SG)) interacts with NADP(+). Lysine 221 serves as a coordination point for phosphate. Arginine 243 lines the substrate pocket. Residue histidine 250 is the Proton acceptor of the active site. Asparagine 324 contacts NADP(+).

The protein belongs to the aspartate-semialdehyde dehydrogenase family. Homodimer.

The catalysed reaction is L-aspartate 4-semialdehyde + phosphate + NADP(+) = 4-phospho-L-aspartate + NADPH + H(+). It functions in the pathway amino-acid biosynthesis; L-lysine biosynthesis via DAP pathway; (S)-tetrahydrodipicolinate from L-aspartate: step 2/4. It participates in amino-acid biosynthesis; L-methionine biosynthesis via de novo pathway; L-homoserine from L-aspartate: step 2/3. Its pathway is amino-acid biosynthesis; L-threonine biosynthesis; L-threonine from L-aspartate: step 2/5. Its function is as follows. Catalyzes the NADPH-dependent formation of L-aspartate-semialdehyde (L-ASA) by the reductive dephosphorylation of L-aspartyl-4-phosphate. This chain is Aspartate-semialdehyde dehydrogenase, found in Bacillus subtilis (strain 168).